Reading from the N-terminus, the 555-residue chain is Alpha-1,2-mannosyltransferase ALG9 (555 aa).

Topologically, residues 1–7 are cytoplasmic; it reads MNCKAVT. The helical transmembrane segment at 8 to 28 threads the bilayer; it reads ISLLLLLFLTRVYIQPTFSLI. Over 29-62 the chain is Lumenal; the sequence is SDCDETFNYWEPLNLLVRGFGKQTWEYSPEYSIR. The chain crosses the membrane as a helical span at residues 63-83; sequence SWAFLLPFYCILYPVNKFTDL. Topologically, residues 84–86 are cytoplasmic; sequence ESH. The helical transmembrane segment at 87-107 threads the bilayer; it reads WNFFITRACLGFFSFIMEFKL. At 108–113 the chain is on the lumenal side; sequence HREIAG. The helical transmembrane segment at 114–134 threads the bilayer; the sequence is SLALQIANIWIIFQLFNPGWF. Over 135-176 the chain is Cytoplasmic; the sequence is HASVELLPSAVAMLLYVGATRHSLRYLSTGSTSNFTKSLAYN. The chain crosses the membrane as a helical span at residues 177-197; sequence FLASILGWPFVLILSLPLCLH. The Lumenal portion of the chain corresponds to 198–213; that stretch reads YLFNHRIISTIRTAFD. The chain crosses the membrane as a helical span at residues 214 to 234; that stretch reads CCLIFSLTAFAVIVTDSIFYG. The Cytoplasmic segment spans residues 235 to 268; sequence KLAPVSWNILFYNVINASEESGPNIFGVEPWYYY. The helical transmembrane segment at 269–289 threads the bilayer; it reads PLNLLLNFPLPVLVLAILGIF. Topologically, residues 290–316 are lumenal; that stretch reads HLRLWPLWASLFTWIAVFTQQPHKEER. A helical transmembrane segment spans residues 317–337; that stretch reads FLYPIYGLITLSASIAFYKVL. Residues 338-349 lie on the Cytoplasmic side of the membrane; it reads NLFNRKPILKKG. The chain crosses the membrane as a helical span at residues 350-370; it reads IKLSVLLIVAGQAMSRIVALV. The Lumenal portion of the chain corresponds to 371-555; it reads NNYTAPIAVY…LFEKPTETTN (185 aa).

The protein belongs to the glycosyltransferase 22 family.

The protein localises to the endoplasmic reticulum membrane. The catalysed reaction is an alpha-D-Man-(1-&gt;2)-alpha-D-Man-(1-&gt;2)-alpha-D-Man-(1-&gt;3)-[alpha-D-Man-(1-&gt;3)-alpha-D-Man-(1-&gt;6)]-beta-D-Man-(1-&gt;4)-beta-D-GlcNAc-(1-&gt;4)-alpha-D-GlcNAc-diphospho-di-trans,poly-cis-dolichol + a di-trans,poly-cis-dolichyl beta-D-mannosyl phosphate = an alpha-D-Man-(1-&gt;2)-alpha-D-Man-(1-&gt;2)-alpha-D-Man-(1-&gt;3)-[alpha-D-Man-(1-&gt;2)-alpha-D-Man-(1-&gt;3)-alpha-D-Man-(1-&gt;6)]-beta-D-Man-(1-&gt;4)-beta-D-GlcNAc-(1-&gt;4)-alpha-D-GlcNAc-diphospho-di-trans,poly-cis-dolichol + a di-trans,poly-cis-dolichyl phosphate + H(+). It catalyses the reaction an alpha-D-Man-(1-&gt;2)-alpha-D-Man-(1-&gt;2)-alpha-D-Man-(1-&gt;3)-[alpha-D-Man-(1-&gt;2)-alpha-D-Man-(1-&gt;3)-[alpha-D-Man-(1-&gt;6)]-alpha-D-Man-(1-&gt;6)]-beta-D-Man-(1-&gt;4)-beta-D-GlcNAc-(1-&gt;4)-alpha-D-GlcNAc-diphospho-di-trans,poly-cis-dolichol + a di-trans,poly-cis-dolichyl beta-D-mannosyl phosphate = an alpha-D-Man-(1-&gt;2)-alpha-D-Man-(1-&gt;2)-alpha-D-Man-(1-&gt;3)-[alpha-D-Man-(1-&gt;2)-alpha-D-Man-(1-&gt;3)-[alpha-D-Man-(1-&gt;2)-alpha-D-Man-(1-&gt;6)]-alpha-D-Man-(1-&gt;6)]-beta-D-Man-(1-&gt;4)-beta-D-GlcNAc-(1-&gt;4)-alpha-D-GlcNAc-diphospho-di-trans,poly-cis-dolichol + a di-trans,poly-cis-dolichyl phosphate + H(+). Its pathway is protein modification; protein glycosylation. Functionally, mannosyltransferase that operates in the biosynthetic pathway of dolichol-linked oligosaccharides, the glycan precursors employed in protein asparagine (N)-glycosylation. The assembly of dolichol-linked oligosaccharides begins on the cytosolic side of the endoplasmic reticulum membrane and finishes in its lumen. The sequential addition of sugars to dolichol pyrophosphate produces dolichol-linked oligosaccharides containing fourteen sugars, including two GlcNAcs, nine mannoses and three glucoses. Once assembled, the oligosaccharide is transferred from the lipid to nascent proteins by oligosaccharyltransferases. In the lumen of the endoplasmic reticulum, catalyzes the addition of the seventh and ninth alpha-1,2-linked mannose residues to Man(6)GlcNAc(2)-PP-dolichol and Man(8)GlcNAc(2)-PP-dolichol respectively. The chain is Alpha-1,2-mannosyltransferase ALG9 (ALG9) from Saccharomyces cerevisiae (strain ATCC 204508 / S288c) (Baker's yeast).